The sequence spans 527 residues: Catalase (527 aa).

Residues 1–22 (MADNRDPASDQMKHWKEQRAAQ) are compositionally biased toward basic and acidic residues. The segment at 1–42 (MADNRDPASDQMKHWKEQRAAQKPDVLTTGGGNPVGDKLNSL) is disordered. Position 2 is a blocked amino end (Ala); alternate (Ala2). Ala2 is modified (N-acetylalanine; alternate). Ser9 bears the Phosphoserine mark. The residue at position 13 (Lys13) is an N6-succinyllysine. Residues His75 and Asn148 contribute to the active site. NADP(+) is bound by residues His194, Phe198, Ser201, Arg203, Asn213, and Tyr215. Residue Lys221 is modified to N6-succinyllysine. At Lys233 the chain carries N6-acetyllysine. Residues Lys237, Trp303, and His305 each contribute to the NADP(+) site. A heme-binding site is contributed by Tyr358. Phosphoserine is present on residues Ser417 and Ser434. Positions 442, 445, and 446 each coordinate NADP(+). N6-acetyllysine; alternate is present on residues Lys449 and Lys480. N6-succinyllysine; alternate is present on residues Lys449 and Lys480. The residue at position 499 (Lys499) is an N6-acetyllysine. Thr511 is subject to Phosphothreonine. Phosphoserine is present on Ser517. The Microbody targeting signal; atypical motif lies at 524 to 527 (KANL).

It belongs to the catalase family. Homotetramer. Interacts (via microbody targeting signal) with PEX5, monomeric form interacts with PEX5, leading to its translocation into peroxisomes. Heme is required as a cofactor. Requires NADP(+) as cofactor.

Its subcellular location is the peroxisome matrix. The enzyme catalyses 2 H2O2 = O2 + 2 H2O. Functionally, catalyzes the degradation of hydrogen peroxide (H(2)O(2)) generated by peroxisomal oxidases to water and oxygen, thereby protecting cells from the toxic effects of hydrogen peroxide. Promotes growth of cells including T-cells, B-cells, myeloid leukemia cells, melanoma cells, mastocytoma cells and normal and transformed fibroblast cells. The polypeptide is Catalase (CAT) (Bos taurus (Bovine)).